We begin with the raw amino-acid sequence, 206 residues long: Large ribosomal subunit protein uL13x (206 aa).

The protein belongs to the universal ribosomal protein uL13 family.

This Arabidopsis thaliana (Mouse-ear cress) protein is Large ribosomal subunit protein uL13x (RPL13AC).